Consider the following 623-residue polypeptide: DEAD-box ATP-dependent RNA helicase 52C (623 aa).

The disordered stretch occupies residues 1 to 120 (MATPSRTSWA…DGDAAAGAGD (120 aa)). The segment covering 10 to 29 (ADVADADPAPAPAPAANGPA) has biased composition (low complexity). The span at 54 to 69 (APPPSSSSSSAPPPRA) shows a compositional bias: pro residues. Low complexity predominate over residues 70-83 (APGLLAPRPAAAGM). A compositionally biased stretch (gly residues) spans 84 to 97 (GRMGGGGGGGGFGG). Positions 155–183 (GTFAEIDLGQALNDNIRRCKYVRPTPVQR) match the Q motif motif. One can recognise a Helicase ATP-binding domain in the interval 186 to 372 (IPISLAGRDL…SDFLENYIFL (187 aa)). ATP is bound at residue 199–206 (AQTGSGKT). The DEAD box motif lies at 316-319 (DEAD). The 152-residue stretch at 399–550 (HLMDLLHAQR…EVPAWLSRYA (152 aa)) folds into the Helicase C-terminal domain. The segment at 553-595 (PSYGGGGGRNRRSGGGSRFGGRDFRRDSSSGRGGGDYYGGGSS) is disordered. Gly residues predominate over residues 555–571 (YGGGGGRNRRSGGGSRF). Positions 572–581 (GGRDFRRDSS) are enriched in basic and acidic residues. Residues 583-595 (GRGGGDYYGGGSS) show a composition bias toward gly residues.

This sequence belongs to the DEAD box helicase family. DDX3/DED1 subfamily.

The catalysed reaction is ATP + H2O = ADP + phosphate + H(+). This chain is DEAD-box ATP-dependent RNA helicase 52C, found in Oryza sativa subsp. japonica (Rice).